The primary structure comprises 678 residues: UvrABC system protein B (678 aa).

Residues 35–422 (EGVSDGLMFQ…ADNVVEQVVR (388 aa)) form the Helicase ATP-binding domain. 48-55 (GVTGSGKT) contacts ATP. The Beta-hairpin signature appears at 101–124 (YYDYYQPEAYVPTRDLFIEKDSSI). Positions 439 to 605 (QVDDLLGEIH…GVSKAVRELI (167 aa)) constitute a Helicase C-terminal domain. A UVR domain is found at 633 to 668 (AREIRRLEKLMMDHARNLEFEQAAAARDALNALKSR).

Belongs to the UvrB family. Forms a heterotetramer with UvrA during the search for lesions. Interacts with UvrC in an incision complex.

It localises to the cytoplasm. Functionally, the UvrABC repair system catalyzes the recognition and processing of DNA lesions. A damage recognition complex composed of 2 UvrA and 2 UvrB subunits scans DNA for abnormalities. Upon binding of the UvrA(2)B(2) complex to a putative damaged site, the DNA wraps around one UvrB monomer. DNA wrap is dependent on ATP binding by UvrB and probably causes local melting of the DNA helix, facilitating insertion of UvrB beta-hairpin between the DNA strands. Then UvrB probes one DNA strand for the presence of a lesion. If a lesion is found the UvrA subunits dissociate and the UvrB-DNA preincision complex is formed. This complex is subsequently bound by UvrC and the second UvrB is released. If no lesion is found, the DNA wraps around the other UvrB subunit that will check the other stand for damage. The protein is UvrABC system protein B of Bordetella pertussis (strain Tohama I / ATCC BAA-589 / NCTC 13251).